We begin with the raw amino-acid sequence, 211 residues long: Probable GTP-binding protein EngB (211 aa).

The 176-residue stretch at 13-188 folds into the EngB-type G domain; sequence SGYEIAFAGR…ASVMAGRLHF (176 aa). Residues 21–28, 48–52, 67–70, 134–137, and 167–169 each bind GTP; these read GRSNAGKS, GRTQM, DLPG, TKAD, and FSS. Residues Ser-28 and Thr-50 each contribute to the Mg(2+) site.

It belongs to the TRAFAC class TrmE-Era-EngA-EngB-Septin-like GTPase superfamily. EngB GTPase family. Requires Mg(2+) as cofactor.

Necessary for normal cell division and for the maintenance of normal septation. The polypeptide is Probable GTP-binding protein EngB (Acinetobacter baumannii (strain ATCC 17978 / DSM 105126 / CIP 53.77 / LMG 1025 / NCDC KC755 / 5377)).